The chain runs to 400 residues: Argininosuccinate synthase (400 aa).

Position 9–17 (9–17 (AYSGGLDTS)) interacts with ATP. Residue Tyr-87 coordinates L-citrulline. Gly-117 provides a ligand contact to ATP. Residues Thr-119, Asn-123, and Asp-124 each contribute to the L-aspartate site. Asn-123 contributes to the L-citrulline binding site. L-citrulline-binding residues include Arg-127, Ser-176, Ser-185, Glu-261, and Tyr-273.

It belongs to the argininosuccinate synthase family. Type 1 subfamily. As to quaternary structure, homotetramer.

Its subcellular location is the cytoplasm. The catalysed reaction is L-citrulline + L-aspartate + ATP = 2-(N(omega)-L-arginino)succinate + AMP + diphosphate + H(+). It participates in amino-acid biosynthesis; L-arginine biosynthesis; L-arginine from L-ornithine and carbamoyl phosphate: step 2/3. This is Argininosuccinate synthase from Pelodictyon phaeoclathratiforme (strain DSM 5477 / BU-1).